A 187-amino-acid polypeptide reads, in one-letter code: Threonylcarbamoyl-AMP synthase (187 aa).

One can recognise a YrdC-like domain in the interval 4–187; that stretch reads TLTLSEAVTA…DARSGHILRL (184 aa).

The protein belongs to the SUA5 family. TsaC subfamily.

It localises to the cytoplasm. The enzyme catalyses L-threonine + hydrogencarbonate + ATP = L-threonylcarbamoyladenylate + diphosphate + H2O. Functionally, required for the formation of a threonylcarbamoyl group on adenosine at position 37 (t(6)A37) in tRNAs that read codons beginning with adenine. Catalyzes the conversion of L-threonine, HCO(3)(-)/CO(2) and ATP to give threonylcarbamoyl-AMP (TC-AMP) as the acyladenylate intermediate, with the release of diphosphate. The sequence is that of Threonylcarbamoyl-AMP synthase from Xylella fastidiosa (strain M12).